Here is a 196-residue protein sequence, read N- to C-terminus: RNA annealing protein YRA2 (196 aa).

Disordered stretches follow at residues 1–63 and 143–196; these read MSVD…PTHQ and DSTR…MNGN. One can recognise an RRM domain in the interval 63–137; it reads QRVRFLNIPL…AKITVEIFEQ (75 aa). The span at 149-159 shows a compositional bias: basic and acidic residues; the sequence is RSTDHVEKEAG.

This sequence belongs to the YRA1 family. In terms of assembly, associates with mRNPs.

Its subcellular location is the nucleus. Functionally, involved in export of poly(A) mRNAs from the nucleus. Recruited to the coding sequences as well as poly-A sites of active genes. This Eremothecium gossypii (strain ATCC 10895 / CBS 109.51 / FGSC 9923 / NRRL Y-1056) (Yeast) protein is RNA annealing protein YRA2 (YRA2).